Here is a 332-residue protein sequence, read N- to C-terminus: 2,3-diketo-L-gulonate reductase (332 aa).

Histidine 44 functions as the Proton donor in the catalytic mechanism. Residues 168-174, 224-225, and 304-306 each bind NAD(+); these read ITMVDMS, WK, and GHE.

It belongs to the LDH2/MDH2 oxidoreductase family. DlgD subfamily. In terms of assembly, homodimer.

It is found in the cytoplasm. It catalyses the reaction 3-dehydro-L-gulonate + NAD(+) = 2,3-dioxo-L-gulonate + NADH + H(+). It carries out the reaction 3-dehydro-L-gulonate + NADP(+) = 2,3-dioxo-L-gulonate + NADPH + H(+). Functionally, catalyzes the reduction of 2,3-diketo-L-gulonate in the presence of NADH, to form 3-keto-L-gulonate. The protein is 2,3-diketo-L-gulonate reductase of Salmonella paratyphi B (strain ATCC BAA-1250 / SPB7).